Here is a 296-residue protein sequence, read N- to C-terminus: Circadian clock oscillator protein KaiA (296 aa).

Residues 2-133 are psR domain, binds oxidized quinones; it reads ARPGLTIALL…LRQGRADGRS (132 aa). Residues 2–152 enclose the KaiA N-terminal domain; it reads ARPGLTIALL…KLSRRLQERL (151 aa). Residues 153–161 are flexible linker; it reads GYLGVFYKR. One can recognise a KaiA C-terminal domain in the interval 162–270; it reads DPSRFLGSLP…CEMYRRSIPP (109 aa).

In terms of assembly, homodimer. The KaiABC complex composition changes during the circadian cycle to control KaiC phosphorylation. Complexes KaiC(6), KaiA(2-4):KaiC(6), KaiB(6):KaiC(6) and KaiC(6):KaiB(6):KaiA(12) are among the most important forms, many form cooperatively. KaiA and CikA bind to the same region of the KaiB(fs) form and therefore compete.

In terms of biological role, key component of the KaiABC oscillator complex, which constitutes the main circadian regulator in cyanobacteria. Complex composition changes during the circadian cycle to control KaiC phosphorylation. KaiA stimulates KaiC autophosphorylation, while KaiB sequesters KaiA, leading to KaiC autodephosphorylation. KaiA binding to the KaiC CII domain during the subjective day yields KaiA(2-4):KaiC(6) complexes which stimulate KaiC autophosphorylation. Phospho-Ser-431 KaiC accumulation triggers binding of KaiB during the subjective night to form the KaiB(6):KaiC(6) complex, leading to changes in the output regulators CikA and SasA. KaiB(6):KaiC(6) formation exposes a site for KaiA binding on KaiB that sequesters KaiA from KaiC's CII domain, making the KaiC(6):KaiB(6):KaiA(12) complex resulting in KaiC autodephosphorylation. Complete dephosphorylation of KaiC leads to dissociation of KaiA(2):KaiB(1), completing 1 cycle of the Kai oscillator. Functionally, binds oxidized quinones via the N-terminal PsR domain, allowing it to sense redox changes and possibly mediate clock input. The chain is Circadian clock oscillator protein KaiA from Parasynechococcus marenigrum (strain WH8102).